Reading from the N-terminus, the 203-residue chain is Large ribosomal subunit protein uL13 (203 aa).

The residue at position 2 (alanine 2) is an N-acetylalanine. Position 59 is a citrulline (arginine 59). A Phosphoserine modification is found at serine 77. A Citrulline modification is found at arginine 140. Residue lysine 191 is modified to N6-acetyllysine.

Belongs to the universal ribosomal protein uL13 family. In terms of assembly, component of the 60S ribosome. Component of the GAIT complex. Interacts with EIF4G1. Phosphorylation at Ser-77 upon interferon-gamma treatment in macrophages involves a DAPK1-DAPK3 kinase cascade and is causing release from the ribosome, association with the GAIT complex and subsequent involvement in transcript-selective translation inhibition. Post-translationally, citrullinated by PADI4.

The protein localises to the cytoplasm. Associated with ribosomes but is not required for canonical ribosome function and has extra-ribosomal functions. Component of the GAIT (gamma interferon-activated inhibitor of translation) complex which mediates interferon-gamma-induced transcript-selective translation inhibition in inflammation processes. Upon interferon-gamma activation and subsequent phosphorylation dissociates from the ribosome and assembles into the GAIT complex which binds to stem loop-containing GAIT elements in the 3'-UTR of diverse inflammatory mRNAs (such as ceruplasmin) and suppresses their translation. In the GAIT complex interacts with m7G cap-bound eIF4G at or near the eIF3-binding site and blocks the recruitment of the 43S ribosomal complex. Involved in methylation of rRNA. The polypeptide is Large ribosomal subunit protein uL13 (RPL13A) (Bos taurus (Bovine)).